The sequence spans 171 residues: Der GTPase-activating protein YihI (171 aa).

Disordered regions lie at residues 1–99 (MKKP…QAEL) and 145–171 (LSYD…RGGN). Basic and acidic residues predominate over residues 20 to 30 (TREELNQEARD). Positions 31–40 (RKRLKKHRGH) are enriched in basic residues. Positions 147 to 160 (YDDDDEDDEEDEKQ) are enriched in acidic residues.

Belongs to the YihI family. Interacts with Der.

Functionally, a GTPase-activating protein (GAP) that modifies Der/EngA GTPase function. May play a role in ribosome biogenesis. The polypeptide is Der GTPase-activating protein YihI (Salmonella choleraesuis (strain SC-B67)).